Consider the following 284-residue polypeptide: Nucleotide-binding protein NMC0691 (284 aa).

8 to 15 (GLSGSGKS) serves as a coordination point for ATP. 58 to 61 (DVRS) is a binding site for GTP.

Belongs to the RapZ-like family.

Functionally, displays ATPase and GTPase activities. This Neisseria meningitidis serogroup C / serotype 2a (strain ATCC 700532 / DSM 15464 / FAM18) protein is Nucleotide-binding protein NMC0691.